The following is a 643-amino-acid chain: Leukocyte immunoglobulin-like receptor subfamily B member 5 (643 aa).

An N-terminal signal peptide occupies residues 1–23 (MTLTLSVLICLGLNVGPRTCVQA). The Extracellular segment spans residues 24 to 458 (GTLPKPTLWA…PQSGLGRHLG (435 aa)). 4 Ig-like C2-type domains span residues 27-116 (PKPT…LELV), 111-228 (DPLE…SLLI), 224-313 (PSLL…DPLD), and 337-418 (GENV…LVVS). Cys49 and Cys98 are disulfide-bonded. N-linked (GlcNAc...) asparagine glycosylation occurs at Asn139. Cystine bridges form between Cys144/Cys195 and Cys244/Cys295. N-linked (GlcNAc...) asparagine glycosylation is found at Asn279 and Asn339. A disulfide bridge connects residues Cys344 and Cys395. Positions 417-433 (VSGPSGDPSLSPTGSTP) are enriched in low complexity. Positions 417-449 (VSGPSGDPSLSPTGSTPTPGPEDQPLTPTGLDP) are disordered. Residues 459 to 479 (VVTGVSVAFVLLLFLLLFLLL) traverse the membrane as a helical segment. Residues 480–643 (RHRHQSKHRT…PSIYAPLAIH (164 aa)) are Cytoplasmic-facing. The disordered stretch occupies residues 493–643 (FYRPAGAAGP…PSIYAPLAIH (151 aa)). Ser514 bears the Phosphoserine mark. 3 stretches are compositionally biased toward basic and acidic residues: residues 531–549 (TQPK…RDED), 557–567 (EVKHSRPRREM), and 579–592 (LDTK…DRQM). Positions 605–610 (VTYAQL) match the ITIM motif 1 motif. The segment covering 615–631 (LRREATEPPPSQEREPP) has biased composition (basic and acidic residues). The ITIM motif 2 signature appears at 635–640 (SIYAPL).

Its subcellular location is the membrane. Functionally, may act as receptor for class I MHC antigens. The sequence is that of Leukocyte immunoglobulin-like receptor subfamily B member 5 (LILRB5) from Pan troglodytes (Chimpanzee).